The chain runs to 38 residues: Antifungal protein 5 (38 aa).

It belongs to the plant LTP family.

Possesses potent antifungal activity against F.graminearum but not P.infestans. The protein is Antifungal protein 5 of Malva parviflora (Little mallow).